We begin with the raw amino-acid sequence, 404 residues long: Phosphoglycerate kinase (404 aa).

Residues Asp26 to Asn28, Arg41, His64 to Arg67, Arg124, and Arg161 each bind substrate. ATP is bound by residues Lys212, Gly301, Glu332, and Gly359 to Ser362.

Belongs to the phosphoglycerate kinase family. Monomer.

It is found in the cytoplasm. It catalyses the reaction (2R)-3-phosphoglycerate + ATP = (2R)-3-phospho-glyceroyl phosphate + ADP. It functions in the pathway carbohydrate degradation; glycolysis; pyruvate from D-glyceraldehyde 3-phosphate: step 2/5. This chain is Phosphoglycerate kinase, found in Mesomycoplasma hyopneumoniae (strain 232) (Mycoplasma hyopneumoniae).